The chain runs to 498 residues: Aldehyde dehydrogenase, mitochondrial (498 aa).

Residues 1–9 (MLRATLARL) constitute a mitochondrion transit peptide. 242–247 (GSTAVG) contributes to the NAD(+) binding site. The Proton acceptor role is filled by Glu265. Cys299 acts as the Nucleophile in catalysis.

It belongs to the aldehyde dehydrogenase family.

It localises to the mitochondrion. It carries out the reaction an aldehyde + NAD(+) + H2O = a carboxylate + NADH + 2 H(+). The protein operates within alcohol metabolism; ethanol degradation; acetate from ethanol: step 2/2. In terms of biological role, could have an RNA-binding activity in addition of its catalytic role. This is Aldehyde dehydrogenase, mitochondrial (ALDH2) from Leishmania tarentolae (Sauroleishmania tarentolae).